We begin with the raw amino-acid sequence, 288 residues long: 4-hydroxy-tetrahydrodipicolinate synthase (288 aa).

Residue threonine 43 coordinates pyruvate. Tyrosine 131 (proton donor/acceptor) is an active-site residue. The active-site Schiff-base intermediate with substrate is the lysine 160. Pyruvate is bound at residue isoleucine 200.

This sequence belongs to the DapA family. Homotetramer; dimer of dimers.

The protein localises to the cytoplasm. The enzyme catalyses L-aspartate 4-semialdehyde + pyruvate = (2S,4S)-4-hydroxy-2,3,4,5-tetrahydrodipicolinate + H2O + H(+). Its pathway is amino-acid biosynthesis; L-lysine biosynthesis via DAP pathway; (S)-tetrahydrodipicolinate from L-aspartate: step 3/4. In terms of biological role, catalyzes the condensation of (S)-aspartate-beta-semialdehyde [(S)-ASA] and pyruvate to 4-hydroxy-tetrahydrodipicolinate (HTPA). This chain is 4-hydroxy-tetrahydrodipicolinate synthase, found in Methanococcus aeolicus (strain ATCC BAA-1280 / DSM 17508 / OCM 812 / Nankai-3).